The chain runs to 1059 residues: MNFQLKNFLILKTLKTFYIEYYKVLIYYLINSIKNYLGDKLYLYYKKNKYTIYILSDFLFFKTTNLTSNITDTVQEFNSKILIFLPLKIKNLKNNKYKIIYYLLGEIPKYTIEKNLIINGLKKTFISKLMFNYIGIFFNKFIKNNNNILYAKIIFNDKFIINIVLEENKCYCIFNNYKYDLICFLYLLGISMQDIFIFSRYNKSFYLKKLLLTLPSLNINNIINYNIFKYLSFFFNLSFKLNTYYIFNKVLNKNNSLYSYIKNFSNSNNLIALDFINILDILLDIKYNKKNITDLDLLEYRSIFTLGNYFTNQYSFYLKKFSNILHNDIFKCIKNLEKYKLNTNSFKSKLYFNLKEYLTVNPLVQYLEQINSFSEIIHKNRVTNYNSKLKQNLQIRNINLNQLGSLCLIDTTEGINCGLVISFTKNIKIEKRNNFQFPYLPVLNIKTKNFITFINSFLQQTYIVLFNNYYLRKNKLFNFFNLSLNKNSFKLKNISIQNMIYIKPMDMFSFAENLIPFIFYNDPARVLMGAKMQSQIVPILKNKRSIIITGYEKNLLNSTNLILKAYQEGIVVYVSSYKIIIRDLYNRKITYFLDKYKRSNHFTILHSKPNVWQGERIFCGQILTSTQDILFSEYIGGNNLLVSYGNFFGYNFEDAIVLNKKIIYSQLFTSLHFKVYEIIFNSLNKFSFEISTINLPKKSFYSKRNLDFFGIIKEGSKVLNNDILVSKIFITNINISLLPLYNLIYILFGKEIKNIKDKSILVSFGNSGRIVKTELFSYSSKIKSYLGYYLKCRVYICKQRLLSVGDKLCGRYGNKGIIAYILPSNDLPYTNTGIIPDIISDSLGIPSRMNIGQLFENLFGLSCYFLNKRLCISNTFNLPKVYIKTILYNYINNIKEKSGNLWIYNSYSPGKILLRDGRQGYKLSEPSFLGISKYSKLIHMIKDKIHYRTIGPYTELMQQPVKGRNKKGGQRFGEMEIWAIEAYGSSYNLRELLNYKSDDIIARTSLLSNLDNNIILDNITTTESFRTLIREIHSMNLNIEAFSSIDQLEGKILPININF.

Belongs to the RNA polymerase beta chain family. As to quaternary structure, in plastids the minimal PEP RNA polymerase catalytic core is composed of four subunits: alpha, beta, beta', and beta''. When a (nuclear-encoded) sigma factor is associated with the core the holoenzyme is formed, which can initiate transcription (Potential).

Its subcellular location is the plastid. The protein localises to the apicoplast. The enzyme catalyses RNA(n) + a ribonucleoside 5'-triphosphate = RNA(n+1) + diphosphate. In terms of biological role, DNA-dependent RNA polymerase catalyzes the transcription of DNA into RNA using the four ribonucleoside triphosphates as substrates. The protein is DNA-directed RNA polymerase subunit beta (rpoB) of Eimeria tenella (Coccidian parasite).